Consider the following 406-residue polypeptide: Arginine deiminase (406 aa).

The active-site Amidino-cysteine intermediate is the Cys-396.

This sequence belongs to the arginine deiminase family.

The protein localises to the cytoplasm. It catalyses the reaction L-arginine + H2O = L-citrulline + NH4(+). It functions in the pathway amino-acid degradation; L-arginine degradation via ADI pathway; carbamoyl phosphate from L-arginine: step 1/2. The protein is Arginine deiminase of Vibrio vulnificus (strain CMCP6).